Consider the following 299-residue polypeptide: Oxygen-dependent coproporphyrinogen-III oxidase (299 aa).

Ser-92 is a binding site for substrate. Mn(2+) is bound by residues His-96 and His-106. His-106 (proton donor) is an active-site residue. 108 to 110 (NVR) serves as a coordination point for substrate. Mn(2+) contacts are provided by His-145 and His-175. The important for dimerization stretch occupies residues 240-275 (YVEFNLVWDRGTLFGLQTGGRTESILMSMPPLVRWE). A substrate-binding site is contributed by 258 to 260 (GGR).

The protein belongs to the aerobic coproporphyrinogen-III oxidase family. Homodimer. The cofactor is Mn(2+).

Its subcellular location is the cytoplasm. It catalyses the reaction coproporphyrinogen III + O2 + 2 H(+) = protoporphyrinogen IX + 2 CO2 + 2 H2O. It functions in the pathway porphyrin-containing compound metabolism; protoporphyrin-IX biosynthesis; protoporphyrinogen-IX from coproporphyrinogen-III (O2 route): step 1/1. Its function is as follows. Involved in the heme biosynthesis. Catalyzes the aerobic oxidative decarboxylation of propionate groups of rings A and B of coproporphyrinogen-III to yield the vinyl groups in protoporphyrinogen-IX. This Escherichia coli O8 (strain IAI1) protein is Oxygen-dependent coproporphyrinogen-III oxidase.